Reading from the N-terminus, the 141-residue chain is Putative pre-16S rRNA nuclease (141 aa).

This sequence belongs to the YqgF nuclease family.

It localises to the cytoplasm. Could be a nuclease involved in processing of the 5'-end of pre-16S rRNA. The protein is Putative pre-16S rRNA nuclease of Coxiella burnetii (strain CbuG_Q212) (Coxiella burnetii (strain Q212)).